A 157-amino-acid polypeptide reads, in one-letter code: Crossover junction endodeoxyribonuclease RuvC (157 aa).

Catalysis depends on residues Asp-7, Glu-67, and Asp-140. Asp-7, Glu-67, and Asp-140 together coordinate Mg(2+).

Belongs to the RuvC family. In terms of assembly, homodimer which binds Holliday junction (HJ) DNA. The HJ becomes 2-fold symmetrical on binding to RuvC with unstacked arms; it has a different conformation from HJ DNA in complex with RuvA. In the full resolvosome a probable DNA-RuvA(4)-RuvB(12)-RuvC(2) complex forms which resolves the HJ. Requires Mg(2+) as cofactor.

The protein localises to the cytoplasm. The catalysed reaction is Endonucleolytic cleavage at a junction such as a reciprocal single-stranded crossover between two homologous DNA duplexes (Holliday junction).. Its function is as follows. The RuvA-RuvB-RuvC complex processes Holliday junction (HJ) DNA during genetic recombination and DNA repair. Endonuclease that resolves HJ intermediates. Cleaves cruciform DNA by making single-stranded nicks across the HJ at symmetrical positions within the homologous arms, yielding a 5'-phosphate and a 3'-hydroxyl group; requires a central core of homology in the junction. The consensus cleavage sequence is 5'-(A/T)TT(C/G)-3'. Cleavage occurs on the 3'-side of the TT dinucleotide at the point of strand exchange. HJ branch migration catalyzed by RuvA-RuvB allows RuvC to scan DNA until it finds its consensus sequence, where it cleaves and resolves the cruciform DNA. This is Crossover junction endodeoxyribonuclease RuvC from Rickettsia bellii (strain OSU 85-389).